A 342-amino-acid chain; its full sequence is Alpha-(1,3)-fucosyltransferase 7 (342 aa).

Residues 1-11 (MQNAGLSPTPS) are Cytoplasmic-facing. Residues 12-31 (LRALGGLAMAALLSTVWLWW) traverse the membrane as a helical; Signal-anchor for type II membrane protein segment. The Extracellular portion of the chain corresponds to 32–342 (RLGAAPGGAP…YQDLEGWFQA (311 aa)). Cys-68 and Cys-76 are disulfide-bonded. N-linked (GlcNAc...) asparagine glycosylation is present at Asn-81. Residues Cys-211 and Cys-214 are joined by a disulfide bond. Asn-291 is a glycosylation site (N-linked (GlcNAc...) asparagine). A disulfide bridge links Cys-318 with Cys-321.

It belongs to the glycosyltransferase 10 family. In terms of processing, N-glycosylated. In terms of tissue distribution, expressed in thymus, spleen, liver and lung. Highly expressed in the thymus and lower expressed in the lung.

The protein resides in the membrane. It catalyses the reaction an N-acetyl-alpha-neuraminyl-(2-&gt;3)-beta-D-galactosyl-(1-&gt;4)-N-acetyl-beta-D-glucosaminyl derivative + GDP-beta-L-fucose = an alpha-Neu5Ac-(2-&gt;3)-beta-D-Gal-(1-&gt;4)-[alpha-L-Fuc-(1-&gt;3)]-beta-D-GlcNAc derivative + GDP + H(+). The catalysed reaction is a neolactoside IV(3)-alpha-NeuAc-nLc4Cer + GDP-beta-L-fucose = a neolactoside IV(3)-alpha-NeuNAc,III(3)-alpha-Fuc-nLc4Cer + GDP + H(+). It carries out the reaction a neolactoside VI(3)-alpha-NeuNAc-nLc6Cer + GDP-beta-L-fucose = a neolactoside VI(3)-alpha-NeuAc,V(3)-alphaFuc-nLc6Cer + GDP + H(+). The enzyme catalyses an alpha-Neu5Ac-(2-&gt;3)-beta-D-Gal-(1-&gt;4)-beta-D-GlcNAc-(1-&gt;3)-beta-D-Gal-(1-&gt;4)-[alpha-L-Fuc-(1-&gt;3)]-beta-D-GlcNAc derivative + GDP-beta-L-fucose = an alpha-Neu5Ac-(2-&gt;3)-beta-D-Gal-(1-&gt;4)-[alpha-L-Fuc-(1-&gt;3)]-beta-D-GlcNAc-(1-&gt;3)-beta-D-Gal-(1-&gt;4)-[alpha-L-Fuc-(1-&gt;3)]-beta-D-GlcNAc derivative + GDP + H(+). It catalyses the reaction an alpha-Neu5Ac-(2-&gt;3)-beta-D-Gal-(1-&gt;4)-beta-D-GlcNAc6S derivative + GDP-beta-L-fucose = an alpha-Neu5Ac-(2-&gt;3)-beta-D-Gal-(1-&gt;4)-[alpha-L-Fuc-(1-&gt;3)]-beta-D-GlcNAc6S derivative + GDP + H(+). The catalysed reaction is alpha-Neu5Ac-(2-&gt;3)-beta-D-Gal-(1-&gt;4)-beta-D-GlcNAc-(1-&gt;3)-beta-D-Gal-(1-&gt;4)-D-Glc + GDP-beta-L-fucose = alpha-Neu5Ac-(2-&gt;3)-beta-D-Gal-(1-&gt;4)-[alpha-L-Fuc-(1-&gt;3)]-beta-D-GlcNAc-(1-&gt;3)-beta-D-Gal-(1-&gt;4)-D-Glc + GDP + H(+). It carries out the reaction alpha-Neu5Ac-(2-&gt;3)-beta-D-Gal-(1-&gt;4)-beta-D-GlcNAc-(1-&gt;3)-beta-D-Gal-(1-&gt;4)-[alpha-L-Fuc-(1-&gt;3)]-beta-D-GlcNAc-(1-&gt;3)-beta-D-Gal-(1-&gt;4)-beta-D-GlcNAc + GDP-beta-L-fucose = alpha-Neu5Ac-(2-&gt;3)-beta-D-Gal-(1-&gt;4)-[alpha-L-Fuc-(1-&gt;3)]-beta-D-GlcNAc-(1-&gt;3)-beta-D-Gal-(1-&gt;4)-[alpha-L-Fuc-(1-&gt;3)]-beta-D-GlcNAc-(1-&gt;3)-beta-D-Gal-(1-&gt;4)-beta-D-GlcNAc + GDP + H(+). The enzyme catalyses alpha-Neu5Ac-(2-&gt;3)-beta-D-Gal-(1-&gt;4)-beta-D-GlcNAc-(1-&gt;3)-beta-D-Gal-(1-&gt;4)-beta-D-GlcNAc-(1-&gt;3)-beta-D-Gal-(1-&gt;4)-beta-D-GlcNAc + GDP-beta-L-fucose = alpha-Neu5Ac-(2-&gt;3)-beta-D-Gal-(1-&gt;4)-[alpha-L-Fuc-(1-&gt;3)]-beta-D-GlcNAc-(1-&gt;3)-beta-D-Gal-(1-&gt;4)-beta-D-GlcNAc-(1-&gt;3)-beta-D-Gal-(1-&gt;4)-beta-D-GlcNAc + GDP + H(+). It participates in protein modification; protein glycosylation. Its activity is regulated as follows. Inhibited by NaCl. Inhibited by GDP in a concentration dependent manner, with an IC(50) value of 93 uM. Also inhibited by GMP and GTP. Inhibited by N-ethylmaleimide. Activated by poly(ethylene glycol) by enhancing the thermal stability of FUT7. Activated by Mn2+, Ca2+, and Mg2+. Both panosialin A and B inhibit activity with IC(50) values of 4.8 and 5.3 ug/ml, respectively. Inhibited by gallic acid (GA) and (-)-epigallocatechin gallate (EGCG) in a time-dependent and irreversible manner with IC(50) values of 60 and 700 nM, respectively. Its function is as follows. Catalyzes the transfer of L-fucose, from a guanosine diphosphate-beta-L-fucose, to the N-acetyl glucosamine (GlcNAc) of a distal alpha2,3 sialylated lactosamine unit of a glycoprotein or a glycolipid-linked sialopolylactosamines chain through an alpha-1,3 glycosidic linkage and participates in the final fucosylation step in the biosynthesis of the sialyl Lewis X (sLe(x)), a carbohydrate involved in cell and matrix adhesion during leukocyte trafficking and fertilization. In vitro, also synthesizes sialyl-dimeric-Lex structures, from VIM-2 structures and both di-fucosylated and trifucosylated structures from mono-fucosylated precursors. However does not catalyze alpha 1-3 fucosylation when an internal alpha 1-3 fucosylation is present in polylactosamine chain and the fucosylation rate of the internal GlcNAc residues is reduced once fucose has been added to the distal GlcNAc. Also catalyzes the transfer of a fucose from GDP-beta-fucose to the 6-sulfated a(2,3)sialylated substrate to produce 6-sulfo sLex mediating significant L-selectin-dependent cell adhesion. Through sialyl-Lewis(x) biosynthesis, can control SELE- and SELP-mediated cell adhesion with leukocytes and allows leukocytes tethering and rolling along the endothelial tissue thereby enabling the leukocytes to accumulate at a site of inflammation. May enhance embryo implantation through sialyl Lewis X (sLeX)-mediated adhesion of embryo cells to endometrium. May affect insulin signaling by up-regulating the phosphorylation and expression of some signaling molecules involved in the insulin-signaling pathway through SLe(x) which is present on the glycans of the INSRR alpha subunit. The chain is Alpha-(1,3)-fucosyltransferase 7 from Bos taurus (Bovine).